The following is a 163-amino-acid chain: MTNYLYILALQIAEAESEGGLFDFNATLPLMAVQILLFMVILNAVFYNPVAKVLDEREEYIRKNLTQASDILAKAEAITKQYEKDLAQERREAQLIISVAQKEAQDIVALEIKQAQKDTELLVNEATSQLNSQKQKALSALEDQVNTLTEQIKSKLLSNQLIS.

Residues 26–46 (ATLPLMAVQILLFMVILNAVF) form a helical membrane-spanning segment.

The protein belongs to the ATPase B chain family. In terms of assembly, F-type ATPases have 2 components, F(1) - the catalytic core - and F(0) - the membrane proton channel. F(1) has five subunits: alpha(3), beta(3), gamma(1), delta(1), epsilon(1). F(0) has four main subunits: a(1), b(1), b'(1) and c(10-14). The alpha and beta chains form an alternating ring which encloses part of the gamma chain. F(1) is attached to F(0) by a central stalk formed by the gamma and epsilon chains, while a peripheral stalk is formed by the delta, b and b' chains.

It localises to the plastid. The protein localises to the chloroplast thylakoid membrane. In terms of biological role, f(1)F(0) ATP synthase produces ATP from ADP in the presence of a proton or sodium gradient. F-type ATPases consist of two structural domains, F(1) containing the extramembraneous catalytic core and F(0) containing the membrane proton channel, linked together by a central stalk and a peripheral stalk. During catalysis, ATP synthesis in the catalytic domain of F(1) is coupled via a rotary mechanism of the central stalk subunits to proton translocation. Functionally, component of the F(0) channel, it forms part of the peripheral stalk, linking F(1) to F(0). The b'-subunit is a diverged and duplicated form of b found in plants and photosynthetic bacteria. The protein is ATP synthase subunit b', chloroplastic of Guillardia theta (Cryptophyte).